Reading from the N-terminus, the 339-residue chain is NADH-quinone oxidoreductase subunit H (339 aa).

9 helical membrane-spanning segments follow: residues 9-29, 50-70, 82-102, 115-135, 161-181, 187-207, 235-255, 275-295, and 311-331; these read IFPLIIIALKVVAITIPLILC, PNVVGPFGLLQPIADAVKLLF, ILFILAPMITFILSLIGWAVI, VGVLYILAISSLSVYGIIIAG, MGLVIITVLLTTGTLNLSEII, MPWWIDLMLLPMGVVFFISVL, MGFALFFLGEYANMILVSAMT, IPGFFWFVFKVGFLLFCFLWI, and GWKVFLPLTLFWVVLVSSVLV.

Belongs to the complex I subunit 1 family. As to quaternary structure, NDH-1 is composed of 14 different subunits. Subunits NuoA, H, J, K, L, M, N constitute the membrane sector of the complex.

It localises to the cell membrane. The catalysed reaction is a quinone + NADH + 5 H(+)(in) = a quinol + NAD(+) + 4 H(+)(out). Its function is as follows. NDH-1 shuttles electrons from NADH, via FMN and iron-sulfur (Fe-S) centers, to quinones in the respiratory chain. The immediate electron acceptor for the enzyme in this species is believed to be ubiquinone. Couples the redox reaction to proton translocation (for every two electrons transferred, four hydrogen ions are translocated across the cytoplasmic membrane), and thus conserves the redox energy in a proton gradient. This subunit may bind ubiquinone. The polypeptide is NADH-quinone oxidoreductase subunit H (Rickettsia africae (strain ESF-5)).